A 329-amino-acid polypeptide reads, in one-letter code: DNA-directed RNA polymerase subunit alpha (329 aa).

The interval 1 to 234 (MQSAVNEFLT…QQLAVFVDLE (234 aa)) is alpha N-terminal domain (alpha-NTD). Residues 248 to 329 (IDPVLLRPVD…WPPASLKNND (82 aa)) are alpha C-terminal domain (alpha-CTD).

It belongs to the RNA polymerase alpha chain family. In terms of assembly, homodimer. The RNAP catalytic core consists of 2 alpha, 1 beta, 1 beta' and 1 omega subunit. When a sigma factor is associated with the core the holoenzyme is formed, which can initiate transcription.

The enzyme catalyses RNA(n) + a ribonucleoside 5'-triphosphate = RNA(n+1) + diphosphate. Functionally, DNA-dependent RNA polymerase catalyzes the transcription of DNA into RNA using the four ribonucleoside triphosphates as substrates. The protein is DNA-directed RNA polymerase subunit alpha of Saccharophagus degradans (strain 2-40 / ATCC 43961 / DSM 17024).